A 313-amino-acid polypeptide reads, in one-letter code: MAQETTRDGSDSPSGSVSPPIANGTNNKKDKKSSKKRAHSSGERRSSVSKPARDPSDKPEESPSKKKKRKTTSSTAAAAVPSTITEEVSPSTSVTRSPSPVIDFDGLSRPSRGTRERLEETEAQKQERLDKMKGAVRTLLECIGEDPDREGLLATPERYAKAMLFLTKGYQENVRDIVNGAIFQEGHNEMVIVKDIEVFSMCEHHLVPFTGKMHIGYIPSNAVIGISKLPRIAELFARRLQIQERLTKEVANAIMEILKPQGVAVVMESSHLCMVMRGVQKTTSSTITSCVLGCFESREKTRLEFLSLIGVNR.

A compositionally biased stretch (basic and acidic residues) spans 1–10 (MAQETTRDGS). The disordered stretch occupies residues 1–120 (MAQETTRDGS…SRGTRERLEE (120 aa)). Positions 11–20 (DSPSGSVSPP) are enriched in low complexity. Residues 29–39 (KDKKSSKKRAH) show a composition bias toward basic residues. Residues 40–64 (SSGERRSSVSKPARDPSDKPEESPS) are compositionally biased toward basic and acidic residues. Over residues 72–102 (TSSTAAAAVPSTITEEVSPSTSVTRSPSPVI) the composition is skewed to low complexity. Residues Cys-202, His-205, and Cys-273 each coordinate Zn(2+).

Belongs to the GTP cyclohydrolase I family. In terms of assembly, toroid-shaped homodecamer, composed of two pentamers of five dimers.

It carries out the reaction GTP + H2O = 7,8-dihydroneopterin 3'-triphosphate + formate + H(+). Its pathway is cofactor biosynthesis; 7,8-dihydroneopterin triphosphate biosynthesis; 7,8-dihydroneopterin triphosphate from GTP: step 1/1. With respect to regulation, GTP shows a positive allosteric effect, and tetrahydrobiopterin inhibits the enzyme activity. Functionally, GTP cyclohydrolase 1 is the first enzyme in the biosynthetic pathway leading to folic acid. The chain is GTP cyclohydrolase 1 (gch-1) from Neurospora crassa (strain ATCC 24698 / 74-OR23-1A / CBS 708.71 / DSM 1257 / FGSC 987).